The primary structure comprises 91 residues: Cell division topological specificity factor (91 aa).

The protein belongs to the MinE family.

Prevents the cell division inhibition by proteins MinC and MinD at internal division sites while permitting inhibition at polar sites. This ensures cell division at the proper site by restricting the formation of a division septum at the midpoint of the long axis of the cell. The chain is Cell division topological specificity factor from Gloeobacter violaceus (strain ATCC 29082 / PCC 7421).